The sequence spans 269 residues: Ubiquinone/menaquinone biosynthesis C-methyltransferase UbiE (269 aa).

S-adenosyl-L-methionine-binding positions include T92, D113, and 141-142 (NA).

The protein belongs to the class I-like SAM-binding methyltransferase superfamily. MenG/UbiE family.

The enzyme catalyses a 2-demethylmenaquinol + S-adenosyl-L-methionine = a menaquinol + S-adenosyl-L-homocysteine + H(+). The catalysed reaction is a 2-methoxy-6-(all-trans-polyprenyl)benzene-1,4-diol + S-adenosyl-L-methionine = a 5-methoxy-2-methyl-3-(all-trans-polyprenyl)benzene-1,4-diol + S-adenosyl-L-homocysteine + H(+). It functions in the pathway quinol/quinone metabolism; menaquinone biosynthesis; menaquinol from 1,4-dihydroxy-2-naphthoate: step 2/2. It participates in cofactor biosynthesis; ubiquinone biosynthesis. In terms of biological role, methyltransferase required for the conversion of demethylmenaquinol (DMKH2) to menaquinol (MKH2) and the conversion of 2-polyprenyl-6-methoxy-1,4-benzoquinol (DDMQH2) to 2-polyprenyl-3-methyl-6-methoxy-1,4-benzoquinol (DMQH2). This Brucella suis (strain ATCC 23445 / NCTC 10510) protein is Ubiquinone/menaquinone biosynthesis C-methyltransferase UbiE.